The following is a 422-amino-acid chain: 3-phosphoshikimate 1-carboxyvinyltransferase (422 aa).

3-phosphoshikimate contacts are provided by Lys20, Ser21, and Arg25. Lys20 contributes to the phosphoenolpyruvate binding site. 2 residues coordinate phosphoenolpyruvate: Gly92 and Arg120. 3-phosphoshikimate-binding residues include Ser163, Ser164, Gln165, Ser191, Asp304, and Lys331. Gln165 is a phosphoenolpyruvate binding site. The Proton acceptor role is filled by Asp304. Residues Arg335 and Arg377 each contribute to the phosphoenolpyruvate site.

This sequence belongs to the EPSP synthase family. In terms of assembly, monomer.

Its subcellular location is the cytoplasm. The catalysed reaction is 3-phosphoshikimate + phosphoenolpyruvate = 5-O-(1-carboxyvinyl)-3-phosphoshikimate + phosphate. The protein operates within metabolic intermediate biosynthesis; chorismate biosynthesis. Its function is as follows. Catalyzes the transfer of the enolpyruvyl moiety of phosphoenolpyruvate (PEP) to the 5-hydroxyl of shikimate-3-phosphate (S3P) to produce enolpyruvyl shikimate-3-phosphate and inorganic phosphate. This chain is 3-phosphoshikimate 1-carboxyvinyltransferase, found in Methanocorpusculum labreanum (strain ATCC 43576 / DSM 4855 / Z).